The following is a 91-amino-acid chain: MARMIHCAKLGKEAEGLDFPPLPGELGKRLYESVSKEAWQGWLKQQTMLINENRLNMADPRARQYLMKQTEKYFFGEGADQASGYVPPAQD.

It belongs to the Fe(2+)-trafficking protein family.

Could be a mediator in iron transactions between iron acquisition and iron-requiring processes, such as synthesis and/or repair of Fe-S clusters in biosynthetic enzymes. The polypeptide is Probable Fe(2+)-trafficking protein (Burkholderia thailandensis (strain ATCC 700388 / DSM 13276 / CCUG 48851 / CIP 106301 / E264)).